Consider the following 209-residue polypeptide: Ribosomal RNA large subunit methyltransferase E (209 aa).

Residues glycine 63, tryptophan 65, aspartate 83, aspartate 99, and aspartate 124 each coordinate S-adenosyl-L-methionine. Lysine 164 acts as the Proton acceptor in catalysis.

It belongs to the class I-like SAM-binding methyltransferase superfamily. RNA methyltransferase RlmE family.

It is found in the cytoplasm. The enzyme catalyses uridine(2552) in 23S rRNA + S-adenosyl-L-methionine = 2'-O-methyluridine(2552) in 23S rRNA + S-adenosyl-L-homocysteine + H(+). Its function is as follows. Specifically methylates the uridine in position 2552 of 23S rRNA at the 2'-O position of the ribose in the fully assembled 50S ribosomal subunit. The sequence is that of Ribosomal RNA large subunit methyltransferase E from Escherichia coli O81 (strain ED1a).